A 173-amino-acid polypeptide reads, in one-letter code: MEQGKHLAGLILAVFLLQGTMAHVKEVKVDDNREDGSVILICVTNDTTITWLKDVEQIGSGDTKKNTWNLGSSTKDPRGIYKCEGSNNQSKSLQIYYRMCQNCIELNPSTVAGFIFTEIVSIFLLAVGVYFIAGQEGVRQSRASDKQTLLNNDQLYQPLKEREDDQYSHLRKN.

The first 22 residues, 1-22, serve as a signal peptide directing secretion; it reads MEQGKHLAGLILAVFLLQGTMA. The Extracellular segment spans residues 23–111; it reads HVKEVKVDDN…NCIELNPSTV (89 aa). The 71-residue stretch at 24–94 folds into the Ig-like domain; sequence VKEVKVDDNR…GSNNQSKSLQ (71 aa). C42 and C83 are disulfide-bonded. N-linked (GlcNAc...) asparagine glycosylation is found at N45 and N88. A helical membrane pass occupies residues 112–132; sequence AGFIFTEIVSIFLLAVGVYFI. Over 133–173 the chain is Cytoplasmic; that stretch reads AGQEGVRQSRASDKQTLLNNDQLYQPLKEREDDQYSHLRKN. A Phosphoserine modification is found at S141. S144 carries the phosphoserine; by PKC modification. The ITAM domain occupies 145-173; the sequence is DKQTLLNNDQLYQPLKEREDDQYSHLRKN. Residues 149-150 carry the Di-leucine motif motif; it reads LL.

As to quaternary structure, the TCR-CD3 complex is composed of a CD3D/CD3E and a CD3G/CD3E heterodimers that preferentially associate with TCRalpha and TCRbeta, respectively, to form TCRalpha/CD3E/CD3G and TCRbeta/CD3G/CD3E trimers. In turn, the hexamer interacts with CD3Z homodimer to form the TCR-CD3 complex. Alternatively, TCRalpha and TCRbeta can be replaced by TCRgamma and TCRdelta. Post-translationally, phosphorylated on Tyr residues after T-cell receptor triggering by LCK in association with CD4/CD8. Phosphorylated also by PKC; leading to the TCR complex down-regulation. Phosphorylated on Tyr residues after T-cell receptor triggering by LCK in association with CD4/CD8.

It is found in the cell membrane. Functionally, part of the TCR-CD3 complex present on T-lymphocyte cell surface that plays an essential role in adaptive immune response. When antigen presenting cells (APCs) activate T-cell receptor (TCR), TCR-mediated signals are transmitted across the cell membrane by the CD3 chains CD3D, CD3E, CD3G and CD3Z. All CD3 chains contain immunoreceptor tyrosine-based activation motifs (ITAMs) in their cytoplasmic domain. Upon TCR engagement, these motifs become phosphorylated by Src family protein tyrosine kinases LCK and FYN, resulting in the activation of downstream signaling pathways. In addition to this role of signal transduction in T-cell activation, CD3G plays an essential role in the dynamic regulation of TCR expression at the cell surface. Indeed, constitutive TCR cycling is dependent on the di-leucine-based (diL) receptor-sorting motif present in CD3G. The sequence is that of T-cell surface glycoprotein CD3 gamma chain (CD3G) from Bos taurus (Bovine).